The primary structure comprises 395 residues: Putative gustatory receptor 93b (395 aa).

Residues 1–18 are Cytoplasmic-facing; sequence MSGLLVMPRILRCLNVSR. Residues 19–39 form a helical membrane-spanning segment; that stretch reads ISAILLRSCFLYGTFFGVITF. Residues 40 to 89 lie on the Extracellular side of the membrane; sequence RIERKDSQLVAINRRGYLWICLVIRLLASCFYGYSYDAWSGQYEDMYLRA. The chain crosses the membrane as a helical span at residues 90–110; the sequence is FFGFRLIGCLICSVIILVMQF. The Cytoplasmic portion of the chain corresponds to 111–153; that stretch reads WFGEELINLVNRFLQLFRRMQSLTNSPKNRFGDRAEFLLMFSK. Residues 154 to 174 traverse the membrane as a helical segment; the sequence is VFSLLFVFMAFRLMLSPWFLL. Residues 175–183 are Extracellular-facing; that stretch reads TLVCDLYTS. Residues 184 to 204 form a helical membrane-spanning segment; the sequence is VGTGMITHLCFVGYLSIGVLY. The Cytoplasmic portion of the chain corresponds to 205–267; it reads RDLNNYVDCQ…RSFQQLFDLP (63 aa). The chain crosses the membrane as a helical span at residues 268 to 288; the sequence is LFLSLAQSLLAMSMVSYHAIL. At 289–293 the chain is on the extracellular side; that stretch reads RRQYS. A helical transmembrane segment spans residues 294–314; that stretch reads FNLWGLVIKLLIDVVLLTMSV. The Cytoplasmic segment spans residues 315 to 369; sequence HSAVNGSRLIRRLSFENFYVTDSQSYHQKLELFLGRLQHQELRVFPLGLFEVSNE. The chain crosses the membrane as a helical span at residues 370–390; sequence LTLFFLSAMVTYLVFLVQYGM. Residues 391–395 are Extracellular-facing; sequence QSQQI.

This sequence belongs to the insect chemoreceptor superfamily. Gustatory receptor (GR) family. Gr93a subfamily. In terms of tissue distribution, in larvae, is expressed in neurons of the terminal external chemosensory organ and of the dorsal pharyngeal sense organ.

It localises to the cell membrane. In terms of biological role, probable gustatory receptor which mediates acceptance or avoidance behavior, depending on its substrates. This is Putative gustatory receptor 93b (Gr93b) from Drosophila melanogaster (Fruit fly).